The following is a 353-amino-acid chain: Putative actin-28 (353 aa).

Belongs to the actin family.

It is found in the cytoplasm. The protein localises to the cytoskeleton. The enzyme catalyses ATP + H2O = ADP + phosphate + H(+). Functionally, actins are highly conserved proteins that are involved in various types of cell motility and are ubiquitously expressed in all eukaryotic cells. Multiple isoforms are involved in various cellular functions such as cytoskeleton structure, cell mobility, chromosome movement and muscle contraction. This is Putative actin-28 (act28) from Dictyostelium discoideum (Social amoeba).